Reading from the N-terminus, the 161-residue chain is 3-isopropylmalate dehydratase small subunit (161 aa).

This sequence belongs to the LeuD family. LeuD type 2 subfamily. In terms of assembly, heterodimer of LeuC and LeuD.

It carries out the reaction (2R,3S)-3-isopropylmalate = (2S)-2-isopropylmalate. It participates in amino-acid biosynthesis; L-leucine biosynthesis; L-leucine from 3-methyl-2-oxobutanoate: step 2/4. In terms of biological role, catalyzes the isomerization between 2-isopropylmalate and 3-isopropylmalate, via the formation of 2-isopropylmaleate. The chain is 3-isopropylmalate dehydratase small subunit from Clostridium botulinum (strain Eklund 17B / Type B).